Here is a 190-residue protein sequence, read N- to C-terminus: Ribosome hibernation promotion factor (190 aa).

Residues 101–190 (RDRGDQEVFV…KYGLIQTSEQ (90 aa)) are required for ribosome-binding.

The protein belongs to the HPF/YfiA ribosome-associated protein family. Long HPF subfamily. In terms of assembly, interacts with 100S ribosomes during exponential growth, as 100S ribosomes decrease (after 28 hours) also found associated with 30s and 50S subunits.

Its subcellular location is the cytoplasm. Functionally, required and sufficient for dimerization of active 70S ribosomes into 100S ribosomes. 110S ribosomes are probably translationally inactive and may serve as a reservoir of easily reactivated ribosomes when necessary in the cell. Also reduces the translation efficiency of a small number of genes. Unlike E.coli, 100S ribosomes are present during exponential growth and decrease during stationary phase. This strain produces 30% fewer 100S ribosomes than strain N315 and RN4200 under the same growth conditions. This chain is Ribosome hibernation promotion factor, found in Staphylococcus aureus (strain USA300).